The chain runs to 174 residues: uncharacterized protein (174 aa).

A disordered region spans residues 137-174 (TNVTLGDDTPKSYDAPVSAIPPPATATTANATGVKPLE).

This is an uncharacterized protein from Acanthamoeba polyphaga (Amoeba).